A 263-amino-acid polypeptide reads, in one-letter code: Small ribosomal subunit protein eS1 (263 aa).

Positions 235–263 (HGEGGGGKGEAGDKSERPEGYEPPVQESV) are disordered. A compositionally biased stretch (basic and acidic residues) spans 244–254 (EAGDKSERPEG).

This sequence belongs to the eukaryotic ribosomal protein eS1 family. As to quaternary structure, component of the small ribosomal subunit. Mature ribosomes consist of a small (40S) and a large (60S) subunit. The 40S subunit contains about 33 different proteins and 1 molecule of RNA (18S). The 60S subunit contains about 49 different proteins and 3 molecules of RNA (28S, 5.8S and 5S).

It is found in the cytoplasm. The chain is Small ribosomal subunit protein eS1 from Bombyx mori (Silk moth).